The chain runs to 487 residues: MPNSMWHQCLEVLRDEFPAQQFNTWLRPLQSDHREGQLMLFAPNRFVMDWVNEKYLRRIEEVLKDLNGGQAPRVMMKVGSAPKPTDPVVRSEVAPPVRVSEETEQTVTEEERSVAATVADSAPRAMSAPAPKAQAERRPVQVEGDIKHQSFLNETFTFDTFVEGKSNQLARAASMQVAENPGGAYNPLFLYGGVGLGKTHLMHAIGNEIVRRNPRAKVAYLRSERFVADMVKALQLNAINEFKRYYRSVDALLIDDIQFFARKERSQEEFFHTFNALLEGGQQVIVTCDRFPKEISDMEERLKSRFGWGLTVMVEPPELETRVAILMKKAEQANVKLSSEAAFFIAQKIRSNVRELEGALRLVIANAHFTGSEITPPFIRESLKDLLALHEKQVSIDNIQRTVAEYYKIKVADLLSKRRTRTVTRPRQVAMSLAKELTNHSLPEIGDAFGGRDHTTVLHACKKIVELQETDPGIREDYQNFMRLLTT.

Residues 1–79 (MPNSMWHQCL…QAPRVMMKVG (79 aa)) are domain I, interacts with DnaA modulators. The tract at residues 78-138 (VGSAPKPTDP…PAPKAQAERR (61 aa)) is disordered. The tract at residues 79–150 (GSAPKPTDPV…QVEGDIKHQS (72 aa)) is domain II. The segment at 151–367 (FLNETFTFDT…GALRLVIANA (217 aa)) is domain III, AAA+ region. ATP contacts are provided by G195, G197, K198, and T199. Positions 368 to 487 (HFTGSEITPP…YQNFMRLLTT (120 aa)) are domain IV, binds dsDNA.

It belongs to the DnaA family. As to quaternary structure, oligomerizes as a right-handed, spiral filament on DNA at oriC.

It is found in the cytoplasm. Functionally, plays an essential role in the initiation and regulation of chromosomal replication. ATP-DnaA binds to the origin of replication (oriC) to initiate formation of the DNA replication initiation complex once per cell cycle. Binds the DnaA box (a 9 base pair repeat at the origin) and separates the double-stranded (ds)DNA. Forms a right-handed helical filament on oriC DNA; dsDNA binds to the exterior of the filament while single-stranded (ss)DNA is stabiized in the filament's interior. The ATP-DnaA-oriC complex binds and stabilizes one strand of the AT-rich DNA unwinding element (DUE), permitting loading of DNA polymerase. After initiation quickly degrades to an ADP-DnaA complex that is not apt for DNA replication. Binds acidic phospholipids. The polypeptide is Chromosomal replication initiator protein DnaA (Marinobacter nauticus (strain ATCC 700491 / DSM 11845 / VT8) (Marinobacter aquaeolei)).